Here is a 452-residue protein sequence, read N- to C-terminus: Cobyrinate a,c-diamide synthase (452 aa).

The region spanning 244 to 429 is the GATase cobBQ-type domain; the sequence is RIAVARDRAF…LHLHWGTQAW (186 aa). Cysteine 325 functions as the Nucleophile in the catalytic mechanism.

Belongs to the CobB/CbiA family. The cofactor is Mg(2+).

The enzyme catalyses cob(II)yrinate + 2 L-glutamine + 2 ATP + 2 H2O = cob(II)yrinate a,c diamide + 2 L-glutamate + 2 ADP + 2 phosphate + 2 H(+). The protein operates within cofactor biosynthesis; adenosylcobalamin biosynthesis; cob(II)yrinate a,c-diamide from sirohydrochlorin (anaerobic route): step 10/10. Functionally, catalyzes the ATP-dependent amidation of the two carboxylate groups at positions a and c of cobyrinate, using either L-glutamine or ammonia as the nitrogen source. The chain is Cobyrinate a,c-diamide synthase from Gloeobacter violaceus (strain ATCC 29082 / PCC 7421).